The primary structure comprises 218 residues: Pyridoxal 5'-phosphate synthase subunit PdxT (218 aa).

Residue glycine 54–serine 56 coordinates L-glutamine. The active-site Nucleophile is the cysteine 86. Residues arginine 120 and isoleucine 149 to arginine 150 each bind L-glutamine. Catalysis depends on charge relay system residues histidine 197 and glutamate 199.

Belongs to the glutaminase PdxT/SNO family. In terms of assembly, in the presence of PdxS, forms a dodecamer of heterodimers. Only shows activity in the heterodimer.

The catalysed reaction is aldehydo-D-ribose 5-phosphate + D-glyceraldehyde 3-phosphate + L-glutamine = pyridoxal 5'-phosphate + L-glutamate + phosphate + 3 H2O + H(+). It carries out the reaction L-glutamine + H2O = L-glutamate + NH4(+). Its pathway is cofactor biosynthesis; pyridoxal 5'-phosphate biosynthesis. Functionally, catalyzes the hydrolysis of glutamine to glutamate and ammonia as part of the biosynthesis of pyridoxal 5'-phosphate. The resulting ammonia molecule is channeled to the active site of PdxS. The protein is Pyridoxal 5'-phosphate synthase subunit PdxT of Saccharopolyspora erythraea (strain ATCC 11635 / DSM 40517 / JCM 4748 / NBRC 13426 / NCIMB 8594 / NRRL 2338).